The chain runs to 118 residues: Large ribosomal subunit protein uL24c (118 aa).

The protein belongs to the universal ribosomal protein uL24 family. In terms of assembly, part of the 50S ribosomal subunit.

Its subcellular location is the plastid. It is found in the organellar chromatophore. Its function is as follows. One of two assembly initiator proteins, it binds directly to the 5'-end of the 23S rRNA, where it nucleates assembly of the 50S subunit. The polypeptide is Large ribosomal subunit protein uL24c (rpl24) (Paulinella chromatophora).